Consider the following 303-residue polypeptide: Geranylgeranyl pyrophosphate synthase (303 aa).

Isopentenyl diphosphate-binding residues include lysine 30, arginine 33, and histidine 62. Aspartate 69 and aspartate 73 together coordinate Mg(2+). A dimethylallyl diphosphate-binding site is contributed by arginine 78. An isopentenyl diphosphate-binding site is contributed by arginine 79. The dimethylallyl diphosphate site is built by lysine 156, threonine 157, glutamine 190, lysine 207, and lysine 217.

It belongs to the FPP/GGPP synthase family. The cofactor is Mg(2+).

It localises to the cytoplasm. It catalyses the reaction isopentenyl diphosphate + dimethylallyl diphosphate = (2E)-geranyl diphosphate + diphosphate. The enzyme catalyses isopentenyl diphosphate + (2E)-geranyl diphosphate = (2E,6E)-farnesyl diphosphate + diphosphate. The catalysed reaction is isopentenyl diphosphate + (2E,6E)-farnesyl diphosphate = (2E,6E,10E)-geranylgeranyl diphosphate + diphosphate. The protein operates within isoprenoid biosynthesis; farnesyl diphosphate biosynthesis; farnesyl diphosphate from geranyl diphosphate and isopentenyl diphosphate: step 1/1. It functions in the pathway isoprenoid biosynthesis; geranyl diphosphate biosynthesis; geranyl diphosphate from dimethylallyl diphosphate and isopentenyl diphosphate: step 1/1. Its pathway is isoprenoid biosynthesis; geranylgeranyl diphosphate biosynthesis; geranylgeranyl diphosphate from farnesyl diphosphate and isopentenyl diphosphate: step 1/1. Its function is as follows. Catalyzes the trans-addition of the three molecules of IPP onto DMAPP to form geranylgeranyl pyrophosphate. The polypeptide is Geranylgeranyl pyrophosphate synthase (Mucor circinelloides f. lusitanicus (Mucor racemosus var. lusitanicus)).